We begin with the raw amino-acid sequence, 741 residues long: D-(-)-3-hydroxybutyrate oligomer hydrolase (741 aa).

A signal peptide spans 1 to 23; that stretch reads MKTIQGKSPGRWYSRGMLLAAMA. Positions 45 to 68 are disordered; it reads NGNAGGNGNNNGNNNGNTVSNTKP. Ser338 acts as the Charge relay system in catalysis.

This sequence belongs to the D-(-)-3-hydroxybutyrate oligomer hydrolase family.

It localises to the secreted. The enzyme catalyses (3R)-hydroxybutanoate dimer + H2O = 2 (R)-3-hydroxybutanoate + H(+). Its pathway is lipid metabolism; butanoate metabolism. Its function is as follows. Participates in the degradation of poly-3-hydroxybutyrate (PHB). It works downstream of poly(3-hydroxybutyrate) depolymerase, hydrolyzing D(-)-3-hydroxybutyrate oligomers of various length (3HB-oligomers) into 3HB-monomers. This is D-(-)-3-hydroxybutyrate oligomer hydrolase from Ralstonia pickettii (Burkholderia pickettii).